The following is a 290-amino-acid chain: MPISKQKWIAYAQLMRFDKPIGTLLLLWPTLWALFLSVKGMPDLSILSIFVLGVIFMRAAGCVINDYADRHIDGAVKRTSKRPLATGAATPEEAKWLFVLLVFCSFILVLFLNTYAIVLSFIAVFLAFIYPFMKRYTHLPQLFLGMAFGWSIPMAYGASIEALPLECWLLFFANLAWTVAYDTQYAMVDRDDDLRIGVKSTAILFAQYDNKIISLLQIVTLFFLGLIGYLSQLHTSYFVVLFLATLLFVYQCKLIKDRERESCFKAFLNNNYFGAMVFVAFLFGIFFDKL.

The next 8 helical transmembrane spans lie at 21–41 (IGTL…VKGM), 44–64 (LSIL…GCVI), 84–104 (LATG…LVFC), 106–126 (FILV…AVFL), 142–162 (LFLG…SIEA), 212–232 (IISL…YLSQ), 235–255 (TSYF…CKLI), and 267–287 (FLNN…GIFF).

Belongs to the UbiA prenyltransferase family. Requires Mg(2+) as cofactor.

It is found in the cell inner membrane. It carries out the reaction all-trans-octaprenyl diphosphate + 4-hydroxybenzoate = 4-hydroxy-3-(all-trans-octaprenyl)benzoate + diphosphate. It functions in the pathway cofactor biosynthesis; ubiquinone biosynthesis. Catalyzes the prenylation of para-hydroxybenzoate (PHB) with an all-trans polyprenyl group. Mediates the second step in the final reaction sequence of ubiquinone-8 (UQ-8) biosynthesis, which is the condensation of the polyisoprenoid side chain with PHB, generating the first membrane-bound Q intermediate 3-octaprenyl-4-hydroxybenzoate. In Pasteurella multocida (strain Pm70), this protein is 4-hydroxybenzoate octaprenyltransferase.